The following is a 215-amino-acid chain: 25 kDa ookinete surface antigen (215 aa).

Positions 1–16 (MNMSYLFFFFFIQLVL) are cleaved as a signal peptide. Residues 29–58 (CKDGFLIQMSNHFECNCNPGFVLTSESTCE) form the EGF-like 1; truncated domain. 3 consecutive EGF-like domains span residues 59-104 (NKVE…SICV), 104-148 (VPNE…NTCT), and 151-191 (GQTE…NACI). Intrachain disulfides connect cysteine 63-cysteine 78, cysteine 72-cysteine 90, cysteine 92-cysteine 103, cysteine 108-cysteine 118, cysteine 113-cysteine 131, cysteine 133-cysteine 147, cysteine 155-cysteine 166, cysteine 159-cysteine 175, and cysteine 177-cysteine 190. Asparagine 144 and asparagine 163 each carry an N-linked (GlcNAc...) asparagine glycan. The GPI-anchor amidated serine moiety is linked to residue serine 192. Residues 193-215 (FSLFNILNLSIIFIISLIYFYII) constitute a propeptide, removed in mature form. Residue asparagine 200 is glycosylated (N-linked (GlcNAc...) asparagine).

It localises to the cell membrane. The protein is 25 kDa ookinete surface antigen of Plasmodium gallinaceum.